The primary structure comprises 101 residues: Urease subunit beta (101 aa).

This sequence belongs to the urease beta subunit family. As to quaternary structure, heterotrimer of UreA (gamma), UreB (beta) and UreC (alpha) subunits. Three heterotrimers associate to form the active enzyme.

It is found in the cytoplasm. It carries out the reaction urea + 2 H2O + H(+) = hydrogencarbonate + 2 NH4(+). It participates in nitrogen metabolism; urea degradation; CO(2) and NH(3) from urea (urease route): step 1/1. This Roseobacter denitrificans (strain ATCC 33942 / OCh 114) (Erythrobacter sp. (strain OCh 114)) protein is Urease subunit beta.